A 280-amino-acid chain; its full sequence is Eukaryotic translation initiation factor 3 subunit F-1 (280 aa).

The 131-residue stretch at 8–138 folds into the MPN domain; it reads VRVHPVVLFQ…LRAYICIQLG (131 aa).

The protein belongs to the eIF-3 subunit F family. Component of the eukaryotic translation initiation factor 3 (eIF-3) complex. The eIF-3 complex interacts with pix.

It is found in the cytoplasm. Its function is as follows. Component of the eukaryotic translation initiation factor 3 (eIF-3) complex, which is involved in protein synthesis of a specialized repertoire of mRNAs and, together with other initiation factors, stimulates binding of mRNA and methionyl-tRNAi to the 40S ribosome. The eIF-3 complex specifically targets and initiates translation of a subset of mRNAs involved in cell proliferation. This chain is Eukaryotic translation initiation factor 3 subunit F-1, found in Drosophila mojavensis (Fruit fly).